The primary structure comprises 227 residues: Venom allergen 5.01 (227 aa).

The N-terminal stretch at Met-1–Thr-23 is a signal peptide. 4 disulfide bridges follow: Cys-27–Cys-39, Cys-31–Cys-124, Cys-49–Cys-117, and Cys-193–Cys-210. The 145-residue stretch at Leu-68–Tyr-212 folds into the SCP domain.

Belongs to the CRISP family. Venom allergen 5-like subfamily. Expressed by the venom gland.

The protein localises to the secreted. This Dolichovespula maculata (Bald-faced hornet) protein is Venom allergen 5.01.